The primary structure comprises 305 residues: Ribonuclease BN (305 aa).

The Zn(2+) site is built by H64, H66, D68, H69, H141, D212, and H270. D68 serves as the catalytic Proton acceptor.

Belongs to the RNase Z family. RNase BN subfamily. In terms of assembly, homodimer. It depends on Zn(2+) as a cofactor.

Zinc phosphodiesterase, which has both exoribonuclease and endoribonuclease activities. The sequence is that of Ribonuclease BN from Escherichia coli O81 (strain ED1a).